Here is a 361-residue protein sequence, read N- to C-terminus: Protein Csal_2339 (361 aa).

Catalysis depends on Ser-91, which acts as the Proton acceptor. Substrate-binding positions include 92 to 93 and 259 to 260; these read GS and GT.

Belongs to the proline racemase family.

It catalyses the reaction trans-4-hydroxy-L-proline = cis-4-hydroxy-D-proline. In vitro, catalyzes the epimerization of trans-4-hydroxy-L-proline (t4LHyp) to cis-4-hydroxy-D-proline (c4DHyp), albeit with very low efficiency. The physiological substrate may be different. Displays neither proline racemase activity nor t3LHyp dehydratase activity. This Chromohalobacter salexigens (strain ATCC BAA-138 / DSM 3043 / CIP 106854 / NCIMB 13768 / 1H11) protein is Protein Csal_2339.